The sequence spans 545 residues: Gamma-curcumene synthase (545 aa).

Mg(2+)-binding residues include aspartate 299, aspartate 303, asparagine 442, and glutamate 450. The DDXXD motif signature appears at 299–303 (DDTYD).

The protein belongs to the terpene synthase family. Mg(2+) is required as a cofactor.

It is found in the cytoplasm. The protein localises to the cytosol. It carries out the reaction (2E,6E)-farnesyl diphosphate = gamma-curcumene + diphosphate. The protein operates within secondary metabolite biosynthesis; terpenoid biosynthesis. Sesquiterpene synthase involved in gamma-curcumene biosynthesis. The protein is Gamma-curcumene synthase of Pogostemon cablin (Patchouli).